The chain runs to 3003 residues: MAX gene-associated protein (3003 aa).

Residues lysine 4 and lysine 178 each participate in a glycyl lysine isopeptide (Lys-Gly) (interchain with G-Cter in SUMO2) cross-link. A DNA-binding region (T-box) is located at residues 84 to 260; that stretch reads MWNEFHNRST…YNPFAKGFRD (177 aa). Over residues 259-277 the composition is skewed to basic and acidic residues; sequence RDDGLSSKPQREGKQRNSS. Residues 259–290 are disordered; the sequence is RDDGLSSKPQREGKQRNSSDQEGNSVSSSPAH. Residues 278-288 show a composition bias toward polar residues; it reads DQEGNSVSSSP. Glycyl lysine isopeptide (Lys-Gly) (interchain with G-Cter in SUMO2) cross-links involve residues lysine 323, lysine 329, lysine 348, lysine 431, lysine 458, lysine 463, and lysine 480. The residue at position 531 (serine 531) is a Phosphoserine. Residues 553 to 647 form a disordered region; that stretch reads ILDNSSTERI…NIPVGPGSTF (95 aa). Lysine 567 is covalently cross-linked (Glycyl lysine isopeptide (Lys-Gly) (interchain with G-Cter in SUMO2)). Positions 595 to 607 are enriched in polar residues; sequence KTVTASHSASPNT. Phosphoserine is present on serine 604. Glycyl lysine isopeptide (Lys-Gly) (interchain with G-Cter in SUMO2) cross-links involve residues lysine 610, lysine 651, lysine 782, lysine 788, lysine 814, and lysine 823. The segment covering 610–621 has biased composition (basic residues); that stretch reads KRGRPRKLRLSK. The residue at position 848 (serine 848) is a Phosphoserine. Residues 871–913 show a composition bias toward polar residues; it reads KQSTISPSTSHSVKPQSVTTASRKTKAQNKQTTLSGRTKSSYK. Disordered regions lie at residues 871 to 946 and 967 to 987; these read KQST…TSDN and LRQAQQQHLQQQGTRPPGLSK. Serine 921 is modified (phosphoserine). Lysine 925 participates in a covalent cross-link: Glycyl lysine isopeptide (Lys-Gly) (interchain with G-Cter in SUMO2). The segment covering 937 to 946 has biased composition (polar residues); sequence KNSLSSTSDN. A compositionally biased stretch (low complexity) spans 969-978; sequence QAQQQHLQQQ. Glycyl lysine isopeptide (Lys-Gly) (interchain with G-Cter in SUMO2) cross-links involve residues lysine 987 and lysine 1088. A disordered region spans residues 1111–1130; it reads LGEEGREGGGVREDEEQLKE. Basic and acidic residues predominate over residues 1113–1122; sequence EEGREGGGVR. Residues lysine 1136, lysine 1158, lysine 1194, and lysine 1202 each participate in a glycyl lysine isopeptide (Lys-Gly) (interchain with G-Cter in SUMO2) cross-link. Disordered regions lie at residues 1186 to 1215, 1246 to 1277, 1297 to 1323, and 1376 to 1424; these read QPDLSSTTKGKLTPGIKPARTYTPKPNPVI, QRQLSPPLSPSSSFQQQSSCYSSPENRVTKEL, SQEKSWKSSCNEGESSSTSYVHQRSPG, and RGEK…DISP. 2 stretches are compositionally biased toward low complexity: residues 1248-1269 and 1303-1315; these read QLSPPLSPSSSFQQQSSCYSSP and KSSCNEGESSSTS. 2 positions are modified to phosphoserine: serine 1423 and serine 1450. Glycyl lysine isopeptide (Lys-Gly) (interchain with G-Cter in SUMO2) cross-links involve residues lysine 1454 and lysine 1495. Disordered stretches follow at residues 1476–1508, 1722–1746, 1856–1885, 1920–1954, 1964–1983, and 1988–2038; these read AKVAASRKPRTLLPSTSNSKMASSGPATNRSGK, PPVSQRPENAPQIPVTTPQISSNNV, ISPPETQNLASKTGSESKITPSTGGQPVGT, IKKESQSTDQKDETNSIKREEETKKALPSKDKALD, SGIIASENTSNNSLDDGGDL, and TLRE…AGSK. Polar residues-rich tracts occupy residues 1488–1507, 1735–1746, and 1859–1880; these read LPSTSNSKMASSGPATNRSG, PVTTPQISSNNV, and PETQNLASKTGSESKITPSTGG. Residues lysine 1937 and lysine 1944 each participate in a glycyl lysine isopeptide (Lys-Gly) (interchain with G-Cter in SUMO2) cross-link. Residues 1964–1976 are compositionally biased toward polar residues; the sequence is SGIIASENTSNNS. Residues lysine 2060 and lysine 2084 each participate in a glycyl lysine isopeptide (Lys-Gly) (interchain with G-Cter in SUMO2) cross-link. Residues 2087 to 2110 form a disordered region; that stretch reads LSGNQVKEQQSNSQAEAKKDCEDS. The span at 2088-2101 shows a compositional bias: polar residues; that stretch reads SGNQVKEQQSNSQA. Glycyl lysine isopeptide (Lys-Gly) (interchain with G-Cter in SUMO2) cross-links involve residues lysine 2104, lysine 2152, and lysine 2179. Arginine 2206 bears the Omega-N-methylarginine mark. The interval 2207–2255 is disordered; sequence GSRHFQGHLLLPREQMKPKQQTKDGRSSAADFTVLDLEDEDEEDEKTDD. The span at 2220-2232 shows a compositional bias: basic and acidic residues; the sequence is EQMKPKQQTKDGR. A Glycyl lysine isopeptide (Lys-Gly) (interchain with G-Cter in SUMO2) cross-link involves residue lysine 2225. Residues 2242–2255 show a composition bias toward acidic residues; it reads DLEDEDEEDEKTDD. Residues lysine 2317, lysine 2352, lysine 2396, and lysine 2471 each participate in a glycyl lysine isopeptide (Lys-Gly) (interchain with G-Cter in SUMO2) cross-link. The bHLH domain occupies 2362 to 2413; it reads YYRRTHTANERRRRGEMRDLFEKLKITLGLLHSSKVSKSLILNRAFSEIQGL. Serine 2480 bears the Phosphoserine mark. Residues 2515-2534 are disordered; the sequence is KRDQATENASPSDTPHSSAN. Positions 2520–2534 are enriched in polar residues; it reads TENASPSDTPHSSAN. Glycyl lysine isopeptide (Lys-Gly) (interchain with G-Cter in SUMO2) cross-links involve residues lysine 2568 and lysine 2618. A compositionally biased stretch (basic and acidic residues) spans 2629–2651; that stretch reads SEASSLKDTERISSRGNHRDSRK. Residues 2629-2654 form a disordered region; it reads SEASSLKDTERISSRGNHRDSRKALG. A Glycyl lysine isopeptide (Lys-Gly) (interchain with G-Cter in SUMO2) cross-link involves residue lysine 2724. Phosphoserine occurs at positions 2849 and 2860. Residues 2877-2917 form a disordered region; it reads LVSHRKSSDGGQSTSGLPAEPESVSSPPILHMKTGPENSNT. Lysine 2979 participates in a covalent cross-link: Glycyl lysine isopeptide (Lys-Gly) (interchain with G-Cter in SUMO2).

As to quaternary structure, component of some MLL1/MLL complex, at least composed of the core components KMT2A/MLL1, ASH2L, HCFC1/HCF1, WDR5 and RBBP5, as well as the facultative components BACC1, CHD8, E2F6, HSP70, INO80C, KANSL1, LAS1L, MAX, MCRS1, MGA, MYST1/MOF, PELP1, PHF20, PRP31, RING2, RUVB1/TIP49A, RUVB2/TIP49B, SENP3, TAF1, TAF4, TAF6, TAF7, TAF9 and TEX10. Interacts with ZMYND11. Interacts with MAX. Requires heterodimerization with MAX for E-box binding. Highly expressed in germ cells and granulosa cells.

Its subcellular location is the nucleus. In terms of biological role, functions as a dual-specificity transcription factor, regulating the expression of both MAX-network and T-box family target genes. Functions as a repressor or an activator. Binds to 5'-AATTTCACACCTAGGTGTGAAATT-3' core sequence and seems to regulate MYC-MAX target genes. Suppresses transcriptional activation by MYC and inhibits MYC-dependent cell transformation. Function activated by heterodimerization with MAX. This heterodimerization serves the dual function of both generating an E-box-binding heterodimer and simultaneously blocking interaction of a corepressor. The chain is MAX gene-associated protein from Mus musculus (Mouse).